The chain runs to 147 residues: Large ribosomal subunit protein uL16 (147 aa).

Belongs to the universal ribosomal protein uL16 family. In terms of assembly, part of the 50S ribosomal subunit.

Its function is as follows. Binds 23S rRNA and is also seen to make contacts with the A and possibly P site tRNAs. The chain is Large ribosomal subunit protein uL16 from Lactobacillus delbrueckii subsp. bulgaricus (strain ATCC 11842 / DSM 20081 / BCRC 10696 / JCM 1002 / NBRC 13953 / NCIMB 11778 / NCTC 12712 / WDCM 00102 / Lb 14).